Here is a 772-residue protein sequence, read N- to C-terminus: Alpha-xylosidase (772 aa).

The Nucleophile role is filled by Asp416. The active site involves Glu419. Asp482 functions as the Proton donor in the catalytic mechanism.

The protein belongs to the glycosyl hydrolase 31 family. Homohexamer.

It catalyses the reaction Hydrolysis of terminal, non-reducing alpha-D-xylose residues with release of alpha-D-xylose.. Functionally, can catalyze the transfer of alpha-xylosyl residue from alpha-xyloside to xylose, glucose, mannose, fructose, maltose, isomaltose, nigerose, kojibiose, sucrose and trehalose. This Escherichia coli (strain K12) protein is Alpha-xylosidase (yicI).